The following is a 165-amino-acid chain: Probable chemoreceptor glutamine deamidase CheD (165 aa).

Belongs to the CheD family.

The catalysed reaction is L-glutaminyl-[protein] + H2O = L-glutamyl-[protein] + NH4(+). Probably deamidates glutamine residues to glutamate on methyl-accepting chemotaxis receptors (MCPs), playing an important role in chemotaxis. This is Probable chemoreceptor glutamine deamidase CheD from Symbiobacterium thermophilum (strain DSM 24528 / JCM 14929 / IAM 14863 / T).